The following is a 341-amino-acid chain: Protein pelota homolog (341 aa).

This sequence belongs to the eukaryotic release factor 1 family. Pelota subfamily. In terms of assembly, monomer. Requires a divalent metal cation as cofactor.

The protein localises to the cytoplasm. In terms of biological role, may function in recognizing stalled ribosomes, interact with stem-loop structures in stalled mRNA molecules, and effect endonucleolytic cleavage of the mRNA. May play a role in the release non-functional ribosomes and degradation of damaged mRNAs. Has endoribonuclease activity. This chain is Protein pelota homolog, found in Methanospirillum hungatei JF-1 (strain ATCC 27890 / DSM 864 / NBRC 100397 / JF-1).